An 877-amino-acid polypeptide reads, in one-letter code: Envelope glycoprotein gp160 (877 aa).

The signal sequence occupies residues 1 to 19 (MKLTLLIGILLIGIGVVLN). Residues 20–707 (TRQQWVTVFY…SWFDFSKWLN (688 aa)) lie on the Extracellular side of the membrane. Residues N36, N69, N118, N135, N148, N158, N173, N204, N216, N258, N261, N272, N282, N288, N300, N312, N322, N379, N420, N431, N495, and N498 are each glycosylated (N-linked (GlcNAc...) asparagine; by host). Intrachain disulfides connect C102/C224, C109/C215, C114/C174, C237/C267, and C247/C259. Residues 114-173 (CVELNSSEPTTTPKSTTASTTNITASTTTLPCVQNKTSTVLESCNETIIEKELNEEPASN) form a V1 region. A V2 region spans residues 174-215 (CTFAMAGYVRDQKKKYSVVWNDAEIMCKKGNNSNRECYMIHC). Residues 317–349 (CKRPGNKTVLPVTIMAGLVFHSQRYNTRLRQAW) form a V3 region. Cysteines 317 and 350 form a disulfide. 2 disulfide bridges follow: C402–C478 and C409–C451. The tract at residues 409–451 (CKMDWFLNYLNNRTVDPDHNPCNGTKGKGKAPGPCAQRTYVAC) is V4. The segment at 494–501 (KNRTNVTL) is V5. The fusion peptide stretch occupies residues 544 to 564 (VPFVLGFLGFLGAAGTAMGAA). Residues 607–623 (LNARVTALEKYLEDQAR) are immunosuppression. 2 N-linked (GlcNAc...) asparagine; by host glycosylation sites follow: N652 and N668. Residues 668-692 (NITTQLEEARAQEEKNLDAYQKLSS) are a coiled coil. Positions 689-710 (KLSSWSDFWSWFDFSKWLNILK) are MPER; binding to GalCer. Residues 708-728 (ILKIGFLDVLGIIGLRLLYTV) traverse the membrane as a helical segment. At 729–877 (YSCIARVRQG…VRQGLEGILN (149 aa)) the chain is on the cytoplasmic side. The YXXL motif; contains endocytosis signal signature appears at 739–742 (YSPL). The tract at residues 751–779 (WKGQPDNAEGPGEGGDKRKNSSEPWQKES) is disordered.

In terms of assembly, the mature envelope protein (Env) consists of a homotrimer of non-covalently associated gp120-gp41 heterodimers. The resulting complex protrudes from the virus surface as a spike. Interacts with host CD4 and CCR5. Gp120 also interacts with the C-type lectins CD209/DC-SIGN and CLEC4M/DC-SIGNR (collectively referred to as DC-SIGN(R)). As to quaternary structure, the mature envelope protein (Env) consists of a homotrimer of non-covalently associated gp120-gp41 heterodimers. The resulting complex protrudes from the virus surface as a spike. Post-translationally, specific enzymatic cleavages in vivo yield mature proteins. Envelope glycoproteins are synthesized as an inactive precursor that is heavily N-glycosylated and processed likely by host cell furin in the Golgi to yield the mature SU and TM proteins. The cleavage site between SU and TM requires the minimal sequence [KR]-X-[KR]-R.

The protein resides in the virion membrane. The protein localises to the host cell membrane. It is found in the host endosome membrane. In terms of biological role, the surface protein gp120 (SU) attaches the virus to the host lymphoid cell by binding to the primary receptor CD4. This interaction induces a structural rearrangement creating a high affinity binding site for a chemokine coreceptor like CCR5. This peculiar 2 stage receptor-interaction strategy allows gp120 to maintain the highly conserved coreceptor-binding site in a cryptic conformation, protected from neutralizing antibodies. These changes are transmitted to the transmembrane protein gp41 and are thought to activate its fusogenic potential by unmasking its fusion peptide. Surface protein gp120 (SU) may target the virus to gut-associated lymphoid tissue (GALT) by binding host ITGA4/ITGB7 (alpha-4/beta-7 integrins), a complex that mediates T-cell migration to the GALT. Interaction between gp120 and ITGA4/ITGB7 would allow the virus to enter GALT early in the infection, infecting and killing most of GALT's resting CD4+ T-cells. This T-cell depletion is believed to be the major insult to the host immune system leading to AIDS. Functionally, the surface protein gp120 is a ligand for CD209/DC-SIGN and CLEC4M/DC-SIGNR, which are respectively found on dendritic cells (DCs), and on endothelial cells of liver sinusoids and lymph node sinuses. These interactions allow capture of viral particles at mucosal surfaces by these cells and subsequent transmission to permissive cells. DCs are professional antigen presenting cells, critical for host immunity by inducing specific immune responses against a broad variety of pathogens. They act as sentinels in various tissues where they take up antigen, process it, and present it to T-cells following migration to lymphoid organs. SIV subverts the migration properties of dendritic cells to gain access to CD4+ T-cells in lymph nodes. Virus transmission to permissive T-cells occurs either in trans (without DCs infection, through viral capture and transmission), or in cis (following DCs productive infection, through the usual CD4-gp120 interaction), thereby inducing a robust infection. In trans infection, bound virions remain infectious over days and it is proposed that they are not degraded, but protected in non-lysosomal acidic organelles within the DCs close to the cell membrane thus contributing to the viral infectious potential during DCs' migration from the periphery to the lymphoid tissues. On arrival at lymphoid tissues, intact virions recycle back to DCs' cell surface allowing virus transmission to CD4+ T-cells. Virion capture also seems to lead to MHC-II-restricted viral antigen presentation, and probably to the activation of SIV-specific CD4+ cells. Its function is as follows. The transmembrane protein gp41 (TM) acts as a class I viral fusion protein. Under the current model, the protein has at least 3 conformational states: pre-fusion native state, pre-hairpin intermediate state, and post-fusion hairpin state. During fusion of viral and target intracellular membranes, the coiled coil regions (heptad repeats) assume a trimer-of-hairpins structure, positioning the fusion peptide in close proximity to the C-terminal region of the ectodomain. The formation of this structure appears to drive apposition and subsequent fusion of viral and target cell membranes. Complete fusion occurs in host cell endosomes. The virus undergoes clathrin-dependent internalization long before endosomal fusion, thus minimizing the surface exposure of conserved viral epitopes during fusion and reducing the efficacy of inhibitors targeting these epitopes. Membranes fusion leads to delivery of the nucleocapsid into the cytoplasm. In terms of biological role, the envelope glycoprotein gp160 precursor down-modulates cell surface CD4 antigen by interacting with it in the endoplasmic reticulum and blocking its transport to the cell surface. The gp120-gp41 heterodimer allows rapid transcytosis of the virus through CD4 negative cells such as simple epithelial monolayers of the intestinal, rectal and endocervical epithelial barriers. Both gp120 and gp41 specifically recognize glycosphingolipids galactosyl-ceramide (GalCer) or 3' sulfo-galactosyl-ceramide (GalS) present in the lipid rafts structures of epithelial cells. Binding to these alternative receptors allows the rapid transcytosis of the virus through the epithelial cells. This transcytotic vesicle-mediated transport of virions from the apical side to the basolateral side of the epithelial cells does not involve infection of the cells themselves. This is Envelope glycoprotein gp160 (env) from Cercopithecidae (Old World monkeys).